An 80-amino-acid chain; its full sequence is Small ribosomal subunit protein uS17 (80 aa).

Belongs to the universal ribosomal protein uS17 family. As to quaternary structure, part of the 30S ribosomal subunit.

Functionally, one of the primary rRNA binding proteins, it binds specifically to the 5'-end of 16S ribosomal RNA. This chain is Small ribosomal subunit protein uS17, found in Brucella suis (strain ATCC 23445 / NCTC 10510).